Here is a 267-residue protein sequence, read N- to C-terminus: Tryptophan synthase alpha chain (267 aa).

Residues Glu-49 and Asp-60 each act as proton acceptor in the active site.

The protein belongs to the TrpA family. In terms of assembly, tetramer of two alpha and two beta chains.

It carries out the reaction (1S,2R)-1-C-(indol-3-yl)glycerol 3-phosphate + L-serine = D-glyceraldehyde 3-phosphate + L-tryptophan + H2O. It participates in amino-acid biosynthesis; L-tryptophan biosynthesis; L-tryptophan from chorismate: step 5/5. The alpha subunit is responsible for the aldol cleavage of indoleglycerol phosphate to indole and glyceraldehyde 3-phosphate. The chain is Tryptophan synthase alpha chain from Solibacter usitatus (strain Ellin6076).